We begin with the raw amino-acid sequence, 414 residues long: tRNA(Ile)-lysidine synthase (414 aa).

13–18 (SGGIDS) contributes to the ATP binding site.

It belongs to the tRNA(Ile)-lysidine synthase family.

It is found in the cytoplasm. The enzyme catalyses cytidine(34) in tRNA(Ile2) + L-lysine + ATP = lysidine(34) in tRNA(Ile2) + AMP + diphosphate + H(+). Its function is as follows. Ligates lysine onto the cytidine present at position 34 of the AUA codon-specific tRNA(Ile) that contains the anticodon CAU, in an ATP-dependent manner. Cytidine is converted to lysidine, thus changing the amino acid specificity of the tRNA from methionine to isoleucine. This is tRNA(Ile)-lysidine synthase from Thermotoga sp. (strain RQ2).